The chain runs to 185 residues: Protein E3 homolog (185 aa).

One can recognise a Z-binding domain in the interval 7–73 (TVNDAEIFSL…SNPPKWFKNY (67 aa)). The DRBM domain maps to 112-179 (NPCIVLNEYC…SKITMDEILD (68 aa)).

It belongs to the poxviridae E3 protein family.

In terms of biological role, RNA-binding protein that plays a role in the inhibition of multiple cellular antiviral responses activated by double-stranded RNA (dsRNA), such as inhibition of PKR activation, necroptosis, and IFN-mediated antiviral activities. Recognizes and binds Z-RNA structures via its Z-binding domain and dsRNA via its DRBM domain: RNA-binding activity is required to escape host ZBP1-dependent necroptosis. Mechanistically, the Z-binding domain binds Z-RNAs that are produced during Yaba-like disease virus infection, thereby competing with Z-RNA detection by host ZBP1, suppressing ZBP1-dependent necroptosis. The sequence is that of Protein E3 homolog from Yaba-like disease virus (YLDV).